The following is a 387-amino-acid chain: Putative glutamate--cysteine ligase 2 (387 aa).

This sequence belongs to the glutamate--cysteine ligase type 2 family. YbdK subfamily.

The enzyme catalyses L-cysteine + L-glutamate + ATP = gamma-L-glutamyl-L-cysteine + ADP + phosphate + H(+). Its function is as follows. ATP-dependent carboxylate-amine ligase which exhibits weak glutamate--cysteine ligase activity. The sequence is that of Putative glutamate--cysteine ligase 2 from Trichormus variabilis (strain ATCC 29413 / PCC 7937) (Anabaena variabilis).